Here is a 487-residue protein sequence, read N- to C-terminus: Protein nucleotidyltransferase YdiU (487 aa).

Residues glycine 90, glycine 92, arginine 93, lysine 113, aspartate 125, glycine 126, arginine 176, and arginine 183 each coordinate ATP. The Proton acceptor role is filled by aspartate 252. Residues asparagine 253 and aspartate 262 each coordinate Mg(2+). Residue aspartate 262 participates in ATP binding.

Belongs to the SELO family. Requires Mg(2+) as cofactor. Mn(2+) is required as a cofactor.

It carries out the reaction L-seryl-[protein] + ATP = 3-O-(5'-adenylyl)-L-seryl-[protein] + diphosphate. The catalysed reaction is L-threonyl-[protein] + ATP = 3-O-(5'-adenylyl)-L-threonyl-[protein] + diphosphate. It catalyses the reaction L-tyrosyl-[protein] + ATP = O-(5'-adenylyl)-L-tyrosyl-[protein] + diphosphate. The enzyme catalyses L-histidyl-[protein] + UTP = N(tele)-(5'-uridylyl)-L-histidyl-[protein] + diphosphate. It carries out the reaction L-seryl-[protein] + UTP = O-(5'-uridylyl)-L-seryl-[protein] + diphosphate. The catalysed reaction is L-tyrosyl-[protein] + UTP = O-(5'-uridylyl)-L-tyrosyl-[protein] + diphosphate. Nucleotidyltransferase involved in the post-translational modification of proteins. It can catalyze the addition of adenosine monophosphate (AMP) or uridine monophosphate (UMP) to a protein, resulting in modifications known as AMPylation and UMPylation. This is Protein nucleotidyltransferase YdiU from Pseudomonas fluorescens (strain Pf0-1).